A 261-amino-acid polypeptide reads, in one-letter code: Succinate dehydrogenase [ubiquinone] iron-sulfur subunit, mitochondrial (261 aa).

One can recognise a 2Fe-2S ferredoxin-type domain in the interval 31–122; it reads FKIYRWNPDT…DVKIYPLPHM (92 aa). [2Fe-2S] cluster-binding residues include Cys82, Cys87, Cys90, and Cys102. The 4Fe-4S ferredoxin-type domain maps to 164–194; it reads DRKKLDGLYECILCACCSTACPSYWWNNEQY. Residues Cys174, Cys177, and Cys180 each coordinate [4Fe-4S] cluster. Cys184 serves as a coordination point for [3Fe-4S] cluster. Trp189 serves as a coordination point for a ubiquinone. [3Fe-4S] cluster contacts are provided by Cys231 and Cys237. Residue Cys241 coordinates [4Fe-4S] cluster.

It belongs to the succinate dehydrogenase/fumarate reductase iron-sulfur protein family. Component of complex II composed of four subunits: a flavoprotein (FP), an iron-sulfur protein (IP), and a cytochrome b composed of a large and a small subunit. [2Fe-2S] cluster is required as a cofactor. Requires [3Fe-4S] cluster as cofactor. The cofactor is [4Fe-4S] cluster.

The protein resides in the mitochondrion inner membrane. It carries out the reaction a quinone + succinate = fumarate + a quinol. It functions in the pathway carbohydrate metabolism; tricarboxylic acid cycle; fumarate from succinate (eukaryal route): step 1/1. Iron-sulfur protein (IP) subunit of succinate dehydrogenase (SDH) that is involved in complex II of the mitochondrial electron transport chain and is responsible for transferring electrons from succinate to ubiquinone (coenzyme Q). This chain is Succinate dehydrogenase [ubiquinone] iron-sulfur subunit, mitochondrial (SDH2), found in Eremothecium gossypii (strain ATCC 10895 / CBS 109.51 / FGSC 9923 / NRRL Y-1056) (Yeast).